A 220-amino-acid chain; its full sequence is UPF0502 protein CV_4303 (220 aa).

Belongs to the UPF0502 family.

The chain is UPF0502 protein CV_4303 from Chromobacterium violaceum (strain ATCC 12472 / DSM 30191 / JCM 1249 / CCUG 213 / NBRC 12614 / NCIMB 9131 / NCTC 9757 / MK).